Here is a 465-residue protein sequence, read N- to C-terminus: Argininosuccinate lyase (465 aa).

This sequence belongs to the lyase 1 family. Argininosuccinate lyase subfamily.

It localises to the cytoplasm. It catalyses the reaction 2-(N(omega)-L-arginino)succinate = fumarate + L-arginine. Its pathway is amino-acid biosynthesis; L-arginine biosynthesis; L-arginine from L-ornithine and carbamoyl phosphate: step 3/3. In Variovorax paradoxus (strain S110), this protein is Argininosuccinate lyase.